We begin with the raw amino-acid sequence, 213 residues long: High frequency lysogenization protein HflD homolog (213 aa).

This sequence belongs to the HflD family.

It localises to the cytoplasm. The protein resides in the cell inner membrane. The sequence is that of High frequency lysogenization protein HflD homolog from Klebsiella pneumoniae (strain 342).